A 132-amino-acid polypeptide reads, in one-letter code: Large-conductance mechanosensitive channel (132 aa).

A run of 3 helical transmembrane segments spans residues 14–34 (VIDL…VSSL), 38–58 (IITP…LKIT), and 69–89 (FIQT…FVKV).

This sequence belongs to the MscL family. In terms of assembly, homopentamer.

The protein localises to the cell membrane. Its function is as follows. Channel that opens in response to stretch forces in the membrane lipid bilayer. May participate in the regulation of osmotic pressure changes within the cell. The polypeptide is Large-conductance mechanosensitive channel (Bacillus thuringiensis (strain Al Hakam)).